The primary structure comprises 328 residues: Putative gluconeogenesis factor (328 aa).

Belongs to the gluconeogenesis factor family.

Its subcellular location is the cytoplasm. Its function is as follows. Required for morphogenesis under gluconeogenic growth conditions. The polypeptide is Putative gluconeogenesis factor (Aquifex aeolicus (strain VF5)).